Consider the following 198-residue polypeptide: uncharacterized protein (198 aa).

The first 28 residues, 1 to 28 (MHPTQRKLMKRIILFLSLLFCIACPAIA), serve as a signal peptide directing secretion.

The protein belongs to the fimbrial protein family.

It localises to the fimbrium. Part of the yadCKLM-htrE-yadVN fimbrial operon. Could contribute to adhesion to various surfaces in specific environmental niches. This is an uncharacterized protein from Escherichia coli (strain K12).